Consider the following 281-residue polypeptide: Bifunctional protein FolD (281 aa).

NADP(+) is bound by residues 165–167 (GRG), Thr-192, and Val-233.

Belongs to the tetrahydrofolate dehydrogenase/cyclohydrolase family. In terms of assembly, homodimer.

The enzyme catalyses (6R)-5,10-methylene-5,6,7,8-tetrahydrofolate + NADP(+) = (6R)-5,10-methenyltetrahydrofolate + NADPH. It catalyses the reaction (6R)-5,10-methenyltetrahydrofolate + H2O = (6R)-10-formyltetrahydrofolate + H(+). Its pathway is one-carbon metabolism; tetrahydrofolate interconversion. Catalyzes the oxidation of 5,10-methylenetetrahydrofolate to 5,10-methenyltetrahydrofolate and then the hydrolysis of 5,10-methenyltetrahydrofolate to 10-formyltetrahydrofolate. This chain is Bifunctional protein FolD, found in Mycobacterium tuberculosis (strain ATCC 25177 / H37Ra).